Consider the following 141-residue polypeptide: Large ribosomal subunit protein uL11 (141 aa).

This sequence belongs to the universal ribosomal protein uL11 family. As to quaternary structure, part of the ribosomal stalk of the 50S ribosomal subunit. Interacts with L10 and the large rRNA to form the base of the stalk. L10 forms an elongated spine to which L12 dimers bind in a sequential fashion forming a multimeric L10(L12)X complex. One or more lysine residues are methylated.

In terms of biological role, forms part of the ribosomal stalk which helps the ribosome interact with GTP-bound translation factors. This is Large ribosomal subunit protein uL11 from Exiguobacterium sibiricum (strain DSM 17290 / CCUG 55495 / CIP 109462 / JCM 13490 / 255-15).